We begin with the raw amino-acid sequence, 64 residues long: Conotoxin Cal12.4 (64 aa).

Residues 1-21 form the signal peptide; that stretch reads MKLTCMLVVLLLVLPFGDLIA.

Belongs to the conotoxin O1 superfamily. Post-translationally, contains 4 disulfide bonds. As to expression, expressed by the venom duct.

The protein localises to the secreted. Functionally, probable neurotoxin. This is Conotoxin Cal12.4 from Californiconus californicus (California cone).